Consider the following 228-residue polypeptide: Putative N-acetylmannosamine-6-phosphate 2-epimerase (228 aa).

Belongs to the NanE family.

The enzyme catalyses an N-acyl-D-glucosamine 6-phosphate = an N-acyl-D-mannosamine 6-phosphate. Its pathway is amino-sugar metabolism; N-acetylneuraminate degradation; D-fructose 6-phosphate from N-acetylneuraminate: step 3/5. Converts N-acetylmannosamine-6-phosphate (ManNAc-6-P) to N-acetylglucosamine-6-phosphate (GlcNAc-6-P). This Pasteurella multocida (strain Pm70) protein is Putative N-acetylmannosamine-6-phosphate 2-epimerase.